Here is a 294-residue protein sequence, read N- to C-terminus: Small ribosomal subunit biogenesis GTPase RsgA 2, mitochondrial (294 aa).

Residues 1–68 (MQTFSSAAAL…RSFLAPVLPL (68 aa)) constitute a mitochondrion transit peptide. In terms of domain architecture, CP-type G spans 155-294 (VSEVLDPPVA…VSFFLSYFIL (140 aa)). 255-263 (GPSGVGKSS) serves as a coordination point for GTP.

Belongs to the TRAFAC class YlqF/YawG GTPase family.

The protein resides in the mitochondrion. This is Small ribosomal subunit biogenesis GTPase RsgA 2, mitochondrial from Arabidopsis thaliana (Mouse-ear cress).